The sequence spans 215 residues: MLQVYLVRHGETQWNAERRIQGQSDSPLTAKGEQQAMQVGERARSLGITHIISSDLGRTKRTAEIIAQACGCDITFDSRLRELDMGVLEKRQIDSLTEEEEGWRRQLVNGTQDGRILGGESMQELSDRVHAALASCLELPQGSRPLLVSHGIALGCLVSTILGLPAWAERRLRLRNCSISRIDYQESQWLASGWVVETAGDVSHLDAPALDELQR.

Substrate contacts are provided by residues 8–15 (RHGETQWN), 21–22 (QG), R58, K60, 82–85 (ELDM), 104–105 (RR), and 151–152 (GI). H9 serves as the catalytic Tele-phosphohistidine intermediate. E82 functions as the Proton donor/acceptor in the catalytic mechanism.

It belongs to the phosphoglycerate mutase family. GpmB subfamily.

The enzyme catalyses (2R)-2-phosphoglycerate = (2R)-3-phosphoglycerate. Its pathway is carbohydrate degradation; glycolysis; pyruvate from D-glyceraldehyde 3-phosphate: step 3/5. The sequence is that of Probable phosphoglycerate mutase GpmB from Salmonella paratyphi A (strain AKU_12601).